The primary structure comprises 2904 residues: Highly reducing polyketide synthase bet1 (2904 aa).

A Ketosynthase family 3 (KS3) domain is found at 8–441 (NEPIAIVGSG…GTNAHAIVES (434 aa)). Active-site for beta-ketoacyl synthase activity residues include Cys-181, His-320, and His-361. An acyl transferase (AT) domain region spans residues 553–875 (VFTGQGAQYA…PYHGTLLRGG (323 aa)). An N-terminal hotdog fold region spans residues 948–1081 (HQLLGDVSPD…GELKVVLVDE (134 aa)). A PKS/mFAS DH domain is found at 948–1257 (HQLLGDVSPD…FKPVGSDASN (310 aa)). Residues 971 to 1255 (PREMTWLEGH…VKFKPVGSDA (285 aa)) form a dehydratase (DH) domain region. The active-site Proton acceptor; for dehydratase activity is His-980. Residues 1098–1257 (MIPVQPSRLY…FKPVGSDASN (160 aa)) form a C-terminal hotdog fold region. Catalysis depends on Asp-1159, which acts as the Proton donor; for dehydratase activity. The methyltransferase (cMeT) domain stretch occupies residues 1411 to 1596 (KQSTLWVASI…GFSGIDTMSP (186 aa)). Residues 2125-2298 (TYWLVGLSGA…RSSVVNVGAI (174 aa)) are ketoreductase (KR)domain. The Carrier domain occupies 2407-2486 (EVANVIKQAY…SLVELAAESI (80 aa)). Ser-2445 is subject to O-(pantetheine 4'-phosphoryl)serine. The segment at 2492–2543 (PGVPQANANPNGPSSPDSDATESSNQNSDVDVTSTRATSPSTPAATSPDSNV) is disordered. Residues 2497 to 2523 (ANANPNGPSSPDSDATESSNQNSDVDV) are compositionally biased toward polar residues. A compositionally biased stretch (low complexity) spans 2524–2541 (TSTRATSPSTPAATSPDS). The reductase (R) domain stretch occupies residues 2585-2817 (LTGCSGLLGH…DLVSVETCCE (233 aa)).

The cofactor is pantetheine 4'-phosphate.

It carries out the reaction 7 malonyl-CoA + acetyl-CoA + 10 AH2 + 5 S-adenosyl-L-methionine + 2 H(+) = dehydroprobetaenone I + 10 A + 5 S-adenosyl-L-homocysteine + 7 CO2 + 8 CoA + 6 H2O. The protein operates within mycotoxin biosynthesis. In terms of biological role, highly reducing polyketide synthase; part of the gene cluster that mediates the biosynthesis of betaenones, phytotoxic polyketides involved in leaf spot disease in sugar beets. The first step of the pathway is the synthesis of dehydroprobetaenone I by the polyketide synthase bet1 and the enoyl reductase bet3 via condensation of one acetyl-CoA starter unit with 7 malonyl-CoA units and 5 methylations. The C-terminal reductase (R) domain of bet1 catalyzes the reductive release of the polyketide chain. Because bet1 lacks a designated enoylreductase (ER) domain, the required activity is provided the enoyl reductase bet3. The short-chain dehydrogenase/reductase bet4 then catalyzes reduction of dehydroprobetaenone I to probetaenone I. The cytochrome P450 monooxygenase bet2 catalyzes successive epoxidation, oxidation (resulting from epoxide opening) and hydroxylation to install a tertiary alcohol in the decaline ring to yield betaenone C from dehydroprobetaenone I and betaenone B from probetaenone I. The FAD-linked oxidoreductase (orf1) is probably responsible for the conversion of betaenone C to betaenone A via an intramolecular aldol reaction between C-1 and C-17 to form the bridged tricyclic system in betaenone A. The chain is Highly reducing polyketide synthase bet1 from Neocamarosporium betae (Beet black rot fungus).